The sequence spans 233 residues: DNA repair protein RecO (233 aa).

Belongs to the RecO family.

Functionally, involved in DNA repair and RecF pathway recombination. The sequence is that of DNA repair protein RecO from Pseudomonas aeruginosa (strain LESB58).